A 709-amino-acid chain; its full sequence is Meiotic sister-chromatid recombination protein 6, mitochondrial (709 aa).

Residues 1–29 (MLRINQRLLVRSLRDAQYQYLKSTALRFL) constitute a mitochondrion transit peptide.

The protein localises to the mitochondrion. In terms of biological role, may be involved in the control of meiotic sister-chromatid recombination. The polypeptide is Meiotic sister-chromatid recombination protein 6, mitochondrial (MSC6) (Candida glabrata (strain ATCC 2001 / BCRC 20586 / JCM 3761 / NBRC 0622 / NRRL Y-65 / CBS 138) (Yeast)).